A 394-amino-acid chain; its full sequence is Elongation factor Tu 1 (394 aa).

Residues 10-204 enclose the tr-type G domain; sequence KPHVNVGTIG…ALDTYIPEPA (195 aa). The G1 stretch occupies residues 19 to 26; sequence GHVDHGKT. Residue 19–26 participates in GTP binding; the sequence is GHVDHGKT. Position 26 (threonine 26) interacts with Mg(2+). The interval 60–64 is G2; the sequence is GITIN. The interval 81-84 is G3; it reads DCPG. GTP is bound by residues 81–85 and 136–139; these read DCPGH and NKCD. Residues 136–139 are G4; the sequence is NKCD. The interval 174-176 is G5; sequence SAL.

It belongs to the TRAFAC class translation factor GTPase superfamily. Classic translation factor GTPase family. EF-Tu/EF-1A subfamily. In terms of assembly, monomer.

The protein localises to the cytoplasm. The catalysed reaction is GTP + H2O = GDP + phosphate + H(+). Its function is as follows. GTP hydrolase that promotes the GTP-dependent binding of aminoacyl-tRNA to the A-site of ribosomes during protein biosynthesis. In Shewanella frigidimarina (strain NCIMB 400), this protein is Elongation factor Tu 1.